The primary structure comprises 274 residues: Thiamine kinase (274 aa).

It belongs to the thiamine kinase family.

The catalysed reaction is thiamine + ATP = thiamine phosphate + ADP + H(+). Its pathway is cofactor biosynthesis; thiamine diphosphate biosynthesis; thiamine phosphate from thiamine: step 1/1. Catalyzes the ATP-dependent phosphorylation of thiamine to thiamine phosphate. Is involved in thiamine salvage. This is Thiamine kinase from Shigella sonnei (strain Ss046).